We begin with the raw amino-acid sequence, 187 residues long: Threonylcarbamoyl-AMP synthase (187 aa).

The YrdC-like domain maps to 4–187 (TLTLSEAVTA…DARSGHILRL (184 aa)).

This sequence belongs to the SUA5 family. TsaC subfamily.

It localises to the cytoplasm. The catalysed reaction is L-threonine + hydrogencarbonate + ATP = L-threonylcarbamoyladenylate + diphosphate + H2O. Functionally, required for the formation of a threonylcarbamoyl group on adenosine at position 37 (t(6)A37) in tRNAs that read codons beginning with adenine. Catalyzes the conversion of L-threonine, HCO(3)(-)/CO(2) and ATP to give threonylcarbamoyl-AMP (TC-AMP) as the acyladenylate intermediate, with the release of diphosphate. This is Threonylcarbamoyl-AMP synthase from Xylella fastidiosa (strain M23).